We begin with the raw amino-acid sequence, 144 residues long: Large ribosomal subunit protein uL11 (144 aa).

It belongs to the universal ribosomal protein uL11 family. As to quaternary structure, part of the ribosomal stalk of the 50S ribosomal subunit. Interacts with L10 and the large rRNA to form the base of the stalk. L10 forms an elongated spine to which L12 dimers bind in a sequential fashion forming a multimeric L10(L12)X complex. One or more lysine residues are methylated.

Its function is as follows. Forms part of the ribosomal stalk which helps the ribosome interact with GTP-bound translation factors. In Saccharopolyspora erythraea (strain ATCC 11635 / DSM 40517 / JCM 4748 / NBRC 13426 / NCIMB 8594 / NRRL 2338), this protein is Large ribosomal subunit protein uL11.